A 329-amino-acid chain; its full sequence is T-cell acute lymphocytic leukemia protein 1 homolog (329 aa).

Disordered regions lie at residues 1-28 (MTER…RMAP), 40-78 (ETSR…KGRD), and 91-125 (TELC…SPPA). Phosphoserine is present on Ser12. The span at 58 to 70 (SGAGGGPASGGGA) shows a compositional bias: gly residues. A compositionally biased stretch (pro residues) spans 96–106 (PPGPAPAPAPA). Ser122 bears the Phosphoserine; by MAPK mark. The residue at position 172 (Ser172) is a Phosphoserine. Positions 187–239 (VRRIFTNSRERWRQQNVNGAFAELRKLIPTHPPDKKLSKNEILRLAMKYINFL) constitute a bHLH domain. The interval 247-329 (EEEGTQRAKP…LPAADGAGPR (83 aa)) is disordered. A compositionally biased stretch (gly residues) spans 263-273 (GAGGGGAGGGI). Low complexity predominate over residues 317–329 (PALLPAADGAGPR).

In terms of assembly, efficient DNA binding requires dimerization with another bHLH protein. Forms heterodimers with TCF3. Binds to the LIM domain containing protein LMO2 and to DRG1. Can assemble in a complex with LDB1 and LMO2. Component of a TAL-1 complex composed at least of CBFA2T3, LDB1, TAL1 and TCF3. Interacts with SBNO2; this interaction inhibits TAL1 occupancy of the DCSTAMP promoter, leading to the activation of the DCSTAMP promoter by the transcription factor MITF. In terms of processing, phosphorylated on serine residues. Phosphorylation of Ser-122 by MAPK is strongly stimulated by hypoxia. Post-translationally, ubiquitinated; subsequent to hypoxia-dependent phosphorylation of Ser-122, ubiquitination targets the protein for rapid degradation via the ubiquitin system. This process may be characteristic for microvascular endothelial cells, since it could not be observed in large vessel endothelial cells. As to expression, erythroid and myeloid cells.

The protein localises to the nucleus. In terms of biological role, implicated in the genesis of hemopoietic malignancies. It may play an important role in hemopoietic differentiation. Serves as a positive regulator of erythroid differentiation. This chain is T-cell acute lymphocytic leukemia protein 1 homolog (Tal1), found in Mus musculus (Mouse).